Consider the following 379-residue polypeptide: Alcohol dehydrogenase class-2 isozyme 2 (379 aa).

Residues Cys47, His69, Cys99, Cys102, Cys105, Cys113, and Cys176 each contribute to the Zn(2+) site. NAD(+) contacts are provided by residues 205 to 210 (GLGGVG), Asp229, Lys234, 298 to 300 (VGV), and Arg374.

Belongs to the zinc-containing alcohol dehydrogenase family. Class-II subfamily. In terms of assembly, homodimer. Zn(2+) is required as a cofactor.

The protein resides in the cytoplasm. The enzyme catalyses a primary alcohol + NAD(+) = an aldehyde + NADH + H(+). It catalyses the reaction a secondary alcohol + NAD(+) = a ketone + NADH + H(+). This is Alcohol dehydrogenase class-2 isozyme 2 (ADH2-2) from Oryctolagus cuniculus (Rabbit).